Here is a 503-residue protein sequence, read N- to C-terminus: ESX-5 secretion system protein EccD5 (503 aa).

The next 11 helical transmembrane spans lie at 137 to 157 (IVAV…ATGV), 169 to 189 (LTTI…MLLL), 200 to 220 (VADI…AAAP), 224 to 244 (VGSP…ALAL), 250 to 270 (RLGI…AALA), 272 to 292 (MVAA…CVVA), 359 to 379 (FLSG…TSLC), 382 to 402 (HTGQ…FLLL), 413 to 433 (SITL…RYAL), 439 to 459 (LAVS…MAAA), and 480 to 500 (YLCL…YAAI).

The protein belongs to the EccD/Snm4 family. Part of the ESX-5 / type VII secretion system (T7SS), which is composed of cytosolic and membrane components. The ESX-5 membrane complex is composed of EccB5, EccC5, EccD5 and EccE5.

The protein localises to the cell inner membrane. Part of the ESX-5 specialized secretion system, which is responsible for the secretion of EsxN and a number of PE_PGRS and PPE proteins, including PPE41. The sequence is that of ESX-5 secretion system protein EccD5 from Mycobacterium tuberculosis (strain CDC 1551 / Oshkosh).